We begin with the raw amino-acid sequence, 782 residues long: uncharacterized protein (782 aa).

The chain crosses the membrane as a helical span at residues 10 to 30 (LLTITIGAVAVSSILLGGIFY). Over residues 57–76 (LDYQKARPSIKDSNLKEIPK) the composition is skewed to basic and acidic residues. Residues 57–171 (LDYQKARPSI…PQPQQVPNNS (115 aa)) are disordered. The span at 77-97 (PKPQPKPKPQPTPFPDPIPTP) shows a compositional bias: pro residues. Positions 98–124 (PKKEELKKPDIKPEEPKKPEIKPEPKP) are enriched in basic and acidic residues. Residues 125–135 (EPIPQPAPPIE) are compositionally biased toward pro residues.

This sequence to U.parvum UU046.

It is found in the membrane. This is an uncharacterized protein from Ureaplasma parvum serovar 3 (strain ATCC 700970).